Reading from the N-terminus, the 640-residue chain is Telomere repeat-binding protein 4 (640 aa).

In terms of domain architecture, Ubiquitin-like spans valine 343 to proline 422. The interval threonine 442–proline 464 is disordered. The HTH myb-type domain occupies serine 530–serine 589. A DNA-binding region (H-T-H motif) is located at residues tryptophan 558–valine 585.

In terms of assembly, homomultimer. Interacts with SNL1 (via PAH2). Interacts with STO. In terms of tissue distribution, expressed ubiquitously. Highest expression in flowers and roots.

Its subcellular location is the nucleus. Its function is as follows. Binds specifically to the plant telomeric double-stranded DNA sequences 5'-TTTAGGG-3'. At least 2 repeats of telomeric sequences are required for binding. Induces DNA bending. The polypeptide is Telomere repeat-binding protein 4 (TRP4) (Arabidopsis thaliana (Mouse-ear cress)).